Here is a 243-residue protein sequence, read N- to C-terminus: MIKILIPTAKEMKVCQNIARPKLSAQTKIIIDYFSTLTVSDLEDIYRINTSAARCEAQRWQDFKSKQLTLNPAIKLFNGLMYRNIKRHNLSTSEAQFMENSVFITSALYGIIPAMTLISPHRLDFNTKIKINNNSLKVFWRENYDTFMQSDDIMVSLLSNEFETVFSPKERQKLIHLNFIEDRDGQLKTHSTISKKARGKCLTAMMENNCQTLEHLKQLRFDGFCYDNELSDSKQLTFVKKQT.

Belongs to the UPF0246 family.

This is UPF0246 protein gbs2036 from Streptococcus agalactiae serotype III (strain NEM316).